A 208-amino-acid chain; its full sequence is NAD(P)H-quinone oxidoreductase subunit I (208 aa).

4Fe-4S ferredoxin-type domains lie at 55 to 84 and 95 to 124; these read GRIH…VDWV and RNYS…MTEE. [4Fe-4S] cluster contacts are provided by Cys64, Cys67, Cys70, Cys74, Cys104, Cys107, Cys110, and Cys114.

The protein belongs to the complex I 23 kDa subunit family. In terms of assembly, NDH-1 is composed of at least 11 different subunits. [4Fe-4S] cluster serves as cofactor.

The protein localises to the cellular thylakoid membrane. The catalysed reaction is a plastoquinone + NADH + (n+1) H(+)(in) = a plastoquinol + NAD(+) + n H(+)(out). It carries out the reaction a plastoquinone + NADPH + (n+1) H(+)(in) = a plastoquinol + NADP(+) + n H(+)(out). Functionally, NDH-1 shuttles electrons from an unknown electron donor, via FMN and iron-sulfur (Fe-S) centers, to quinones in the respiratory and/or the photosynthetic chain. The immediate electron acceptor for the enzyme in this species is believed to be plastoquinone. Couples the redox reaction to proton translocation, and thus conserves the redox energy in a proton gradient. The polypeptide is NAD(P)H-quinone oxidoreductase subunit I (Prochlorococcus marinus (strain AS9601)).